A 298-amino-acid chain; its full sequence is Oxygen-dependent coproporphyrinogen-III oxidase (298 aa).

Substrate is bound at residue S90. A divalent metal cation-binding residues include H94 and H104. The active-site Proton donor is the H104. A substrate-binding site is contributed by 106 to 108 (NVR). The a divalent metal cation site is built by H143 and H173. The segment at 238–273 (YVEFNLVWDRGTLFGLQSGGRTESILMSLPPIVKWR) is important for dimerization. 256 to 258 (GGR) is a binding site for substrate.

It belongs to the aerobic coproporphyrinogen-III oxidase family. Homodimer. A divalent metal cation serves as cofactor.

It localises to the cytoplasm. It carries out the reaction coproporphyrinogen III + O2 + 2 H(+) = protoporphyrinogen IX + 2 CO2 + 2 H2O. Its pathway is porphyrin-containing compound metabolism; protoporphyrin-IX biosynthesis; protoporphyrinogen-IX from coproporphyrinogen-III (O2 route): step 1/1. Its function is as follows. Involved in the heme biosynthesis. Catalyzes the aerobic oxidative decarboxylation of propionate groups of rings A and B of coproporphyrinogen-III to yield the vinyl groups in protoporphyrinogen-IX. This Dechloromonas aromatica (strain RCB) protein is Oxygen-dependent coproporphyrinogen-III oxidase.